The chain runs to 324 residues: Cyclin-dependent kinase 1 (324 aa).

The Protein kinase domain occupies Tyr-4 to Phe-307. Residues Ile-10–Val-18 and Lys-34 contribute to the ATP site. The residue at position 14 (Thr-14) is a Phosphothreonine. Tyr-15 carries the phosphotyrosine modification. The active-site Proton acceptor is Asp-148. Thr-181 is subject to Phosphothreonine; by CAK.

The protein belongs to the protein kinase superfamily. CMGC Ser/Thr protein kinase family. CDC2/CDKX subfamily. Forms a stable but non-covalent complex with a regulatory subunit (SUC1) and with a cyclin.

The enzyme catalyses L-seryl-[protein] + ATP = O-phospho-L-seryl-[protein] + ADP + H(+). It carries out the reaction L-threonyl-[protein] + ATP = O-phospho-L-threonyl-[protein] + ADP + H(+). With respect to regulation, phosphorylation at Thr-14 or Tyr-15 inactivates the enzyme, while phosphorylation at Thr-181 activates it. Its function is as follows. Cyclin-dependent kinase that acts as a master regulator of the mitotic and meiotic cell cycles. The protein is Cyclin-dependent kinase 1 of Ajellomyces capsulatus (Darling's disease fungus).